The primary structure comprises 354 residues: Isopentenyl-diphosphate delta-isomerase (354 aa).

6–7 serves as a coordination point for substrate; the sequence is RK. FMN-binding positions include 63–65, Ser-93, and Asn-122; that span reads AMT. Substrate is bound at residue 93–95; it reads SQR. Residue Gln-160 participates in substrate binding. Residue Glu-161 coordinates Mg(2+). FMN is bound by residues Lys-192, Thr-221, 273–275, and 294–295; these read GIR and SQ.

It belongs to the IPP isomerase type 2 family. In terms of assembly, homooctamer. Dimer of tetramers. The cofactor is FMN. Requires NADPH as cofactor. It depends on Mg(2+) as a cofactor.

Its subcellular location is the cytoplasm. The enzyme catalyses isopentenyl diphosphate = dimethylallyl diphosphate. In terms of biological role, involved in the biosynthesis of isoprenoids. Catalyzes the 1,3-allylic rearrangement of the homoallylic substrate isopentenyl (IPP) to its allylic isomer, dimethylallyl diphosphate (DMAPP). The sequence is that of Isopentenyl-diphosphate delta-isomerase from Pyrobaculum islandicum (strain DSM 4184 / JCM 9189 / GEO3).